The following is a 167-amino-acid chain: Peptide deformylase (167 aa).

Cys91 and His133 together coordinate Fe cation. Glu134 is a catalytic residue. Residue His137 participates in Fe cation binding.

This sequence belongs to the polypeptide deformylase family. Fe(2+) is required as a cofactor.

It carries out the reaction N-terminal N-formyl-L-methionyl-[peptide] + H2O = N-terminal L-methionyl-[peptide] + formate. Functionally, removes the formyl group from the N-terminal Met of newly synthesized proteins. Requires at least a dipeptide for an efficient rate of reaction. N-terminal L-methionine is a prerequisite for activity but the enzyme has broad specificity at other positions. The sequence is that of Peptide deformylase from Neisseria gonorrhoeae (strain ATCC 700825 / FA 1090).